The chain runs to 321 residues: Quinol oxidase subunit 2 (321 aa).

Positions 1–25 (MIFLFRALKPLLVLALLTVVFVLGG) are cleaved as a signal peptide. Residue Cys-26 is the site of N-palmitoyl cysteine attachment. Cys-26 carries S-diacylglycerol cysteine lipidation. 2 helical membrane passes run 49-69 (SIGF…IILV) and 90-110 (TFLE…LSVP). Residues 294 to 321 (QAVSPHSKTDPFENVKKNEFKKSDDTEE) are disordered. A compositionally biased stretch (basic and acidic residues) spans 300 to 321 (SKTDPFENVKKNEFKKSDDTEE).

It belongs to the cytochrome c oxidase subunit 2 family. As to quaternary structure, interacts with FloT.

The protein localises to the cell membrane. It is found in the membrane raft. It catalyses the reaction 2 a quinol + O2 = 2 a quinone + 2 H2O. Functionally, catalyzes quinol oxidation with the concomitant reduction of oxygen to water. Major component for energy conversion during vegetative growth. Subunit II transfers the electrons from a quinol to the binuclear center of the catalytic subunit I. The sequence is that of Quinol oxidase subunit 2 (qoxA) from Bacillus subtilis (strain 168).